Here is a 343-residue protein sequence, read N- to C-terminus: N-acetyl-gamma-glutamyl-phosphate reductase (343 aa).

Cys147 is an active-site residue.

Belongs to the NAGSA dehydrogenase family. Type 1 subfamily.

It is found in the cytoplasm. The enzyme catalyses N-acetyl-L-glutamate 5-semialdehyde + phosphate + NADP(+) = N-acetyl-L-glutamyl 5-phosphate + NADPH + H(+). It participates in amino-acid biosynthesis; L-arginine biosynthesis; N(2)-acetyl-L-ornithine from L-glutamate: step 3/4. Functionally, catalyzes the NADPH-dependent reduction of N-acetyl-5-glutamyl phosphate to yield N-acetyl-L-glutamate 5-semialdehyde. This Listeria monocytogenes serotype 4b (strain CLIP80459) protein is N-acetyl-gamma-glutamyl-phosphate reductase.